Reading from the N-terminus, the 459-residue chain is Methylenetetrahydrofolate--tRNA-(uracil-5-)-methyltransferase TrmFO (459 aa).

Residue 26–31 (GGGLAG) participates in FAD binding.

Belongs to the MnmG family. TrmFO subfamily. The cofactor is FAD.

Its subcellular location is the cytoplasm. It carries out the reaction uridine(54) in tRNA + (6R)-5,10-methylene-5,6,7,8-tetrahydrofolate + NADH + H(+) = 5-methyluridine(54) in tRNA + (6S)-5,6,7,8-tetrahydrofolate + NAD(+). The enzyme catalyses uridine(54) in tRNA + (6R)-5,10-methylene-5,6,7,8-tetrahydrofolate + NADPH + H(+) = 5-methyluridine(54) in tRNA + (6S)-5,6,7,8-tetrahydrofolate + NADP(+). Functionally, catalyzes the folate-dependent formation of 5-methyl-uridine at position 54 (M-5-U54) in all tRNAs. The sequence is that of Methylenetetrahydrofolate--tRNA-(uracil-5-)-methyltransferase TrmFO from Synechococcus sp. (strain JA-2-3B'a(2-13)) (Cyanobacteria bacterium Yellowstone B-Prime).